We begin with the raw amino-acid sequence, 327 residues long: Aldo-keto reductase FVEG_12638 (327 aa).

Position 51 (aspartate 51) interacts with NADP(+). Tyrosine 56 (proton donor) is an active-site residue. A substrate-binding site is contributed by histidine 122. NADP(+) contacts are provided by residues 152-153 (SE), 202-212 (GPLGHGWLVED), and 286-294 (ENFTSRDIE).

This sequence belongs to the aldo/keto reductase family. Aldo/keto reductase 2 subfamily.

Functionally, aldo-keto reductase; part of the Fusarium detoxification of benzoxazolinone cluster 2 (FDB2) involved in the degradation of benzoxazolinones produced by the host plant. Maize, wheat, and rye produce the 2 benzoxazinone phytoanticipins 2,4-dihy-droxy-7-methoxy-1,4-benzoxazin-3-one (DIMBOA) and 2,4-dihydroxy-1,4-benzoxazin-3-one (DIBOA) that, due to their inherent instability once released, spontaneously degrade to the more stable corresponding benzoxazolinones, 6-methoxy-2-benzoxazolinone (MBOA) and 2-benzoxazolinone (BOA), respectively. The first step in the detoxification of benzoxazolinones involves the hydrolysis of the cyclic ester bond of benzoxazolinones by the FDB1 cluster gamma-lactamase MBL1 to aminophenols. MBL1 is able to convert BOA into 2-aminophenol (2-AP), as well as MBOA into 5-methoxy-2-aminophenol (2-AMP). The FDB2 cluster N-malonyltransferase FDB2/NAT1 then metabolizes aminophenols via N-malonylation to non-toxic malonamic acids. FDB2/NAT1 converts 2-AP into N-(2-hydroxyphenyl) malonamic acid (HPMA) and 2-AMP into N-(2-hydroxy-4-methoxyphenyl) malonamic acid (HMPMA). The duplicated dienlactone hydrolases DLH1 and DLH2 may provide redundant function for hydrolyzing the lactone moiety in the BOA molecule. The roles of the amidases an other enzymes encoded by the 2 FDB clusters have not been identified so far. In Gibberella moniliformis (strain M3125 / FGSC 7600) (Maize ear and stalk rot fungus), this protein is Aldo-keto reductase FVEG_12638.